The sequence spans 496 residues: MAKLGTMPPQHAAKPVDEHAARLIPEDSVPIQTQKPFTTLSAIGIGYGVTNTAVGIPLILSTAMPMGGSPQVFWGFLAMAAVGLATATTLAELVSAMPHPGGQYIWVNALAPKRYRRGLSYTTAMISWVAAVATGSSGNLSVPLNAFSIVTLLQPDFVYRRWMGFAAFQAINVVTCFGACFEHALPKLSKAFLLFNVVSVGVIIVALFAMADARTSAKDFFTTVNTSGWPDGVAFIIGLNGANWCFSCLDVATHLAEEIPSPGTNIPKALLWTIFIASTSGLLVVLAVLVNLGPVDVSDYSGIGIFYRITGSKAAAIGLWIPVLILVLASVWSIQTWQSRLAWTISRESGFPLHRHFSKIFPAPFYTPIWSLVGSAVGTALFGCLYLASELAFNSLIATGILLQYISYSIPTVLVLWQGRRNFRHGQFWYPRLGLVANFIMLAWTVVAFVFYCFPANAQVRPSQMNYVSGVLVVIATFIAALWILYARKNYRVMEI.

The next 5 membrane-spanning stretches (helical) occupy residues 40 to 60 (LSAI…PLIL), 72 to 92 (VFWG…TLAE), 124 to 144 (AMIS…SVPL), 162 to 182 (WMGF…ACFE), and 191 to 211 (AFLL…FAMA). Asparagine 225 carries N-linked (GlcNAc...) asparagine glycosylation. The next 6 helical transmembrane spans lie at 270–290 (LLWT…AVLV), 314–334 (AAAI…VWSI), 368–388 (PIWS…LYLA), 396–416 (LIAT…VLVL), 434–454 (GLVA…FYCF), and 467–487 (YVSG…ILYA).

This sequence belongs to the amino acid-polyamine-organocation (APC) superfamily. Amino acid/choline transporter (ACT) (TC 2.A.3.4) family.

Its subcellular location is the membrane. Transmembrane transporter; part of the gene cluster that mediates the biosynthesis of swainsonine, a cytotoxic fungal alkaloid and a potential cancer therapy drug. Does not mediate the secretion of SW and the exact role of swnT in SW biosynthesis remains to be determined. The chain is Transmembrane transporter swnT from Metarhizium robertsii (strain ARSEF 23 / ATCC MYA-3075) (Metarhizium anisopliae (strain ARSEF 23)).